The sequence spans 703 residues: Antigen peptide transporter 2 (703 aa).

At Met-1–Pro-6 the chain is on the lumenal side. Residues Arg-7 to Leu-27 form a helical membrane-spanning segment. Topologically, residues Gly-28 to Gly-56 are cytoplasmic. The helical transmembrane segment at Gly-57 to Phe-77 threads the bilayer. The Lumenal portion of the chain corresponds to Ser-78 to Ser-98. Residues Trp-99–Leu-119 traverse the membrane as a helical segment. Topologically, residues Ser-120–Asp-148 are cytoplasmic. A helical transmembrane segment spans residues Leu-149–Ile-169. Positions Leu-152–Ser-435 constitute an ABC transmembrane type-1 domain. At Pro-170–Asp-187 the chain is on the lumenal side. Residues Ala-188–Gly-208 traverse the membrane as a helical segment. Topologically, residues Cys-209–Leu-266 are cytoplasmic. Residues Asn-267–Gln-287 form a helical membrane-spanning segment. The Lumenal portion of the chain corresponds to Val-288–Thr-293. Residues Phe-294–His-314 form a helical membrane-spanning segment. Residues Pro-301 to Val-389 form a part of the peptide-binding site region. Over Gln-315–Ser-374 the chain is Cytoplasmic. The chain crosses the membrane as a helical span at residues Leu-375–Gly-395. Residues Val-396–Gly-408 lie on the Lumenal side of the membrane. The helical transmembrane segment at Leu-409–Met-429 threads the bilayer. The tract at residues Leu-414–Met-433 is part of the peptide-binding site. At Tyr-430–Ala-703 the chain is on the cytoplasmic side. The ABC transporter domain occupies Val-468–Glu-702. Gly-503 to Ser-510 contacts ATP.

The protein belongs to the ABC transporter superfamily. ABCB family. MHC peptide exporter (TC 3.A.1.209) subfamily. As to quaternary structure, heterodimer of TAP1 and TAP2 (TAP1-TAP2). A component of the peptide loading complex (PLC), interacts via TAPBP with MHCI heterodimer; this interaction mediates peptide-MHCI assembly. Requires Mg(2+) as cofactor.

It localises to the endoplasmic reticulum membrane. The enzyme catalyses a peptide antigen(in) + ATP + H2O = a peptide antigen(out) + ADP + phosphate + H(+). In terms of biological role, ABC transporter associated with antigen processing. In complex with TAP1 mediates unidirectional translocation of peptide antigens from cytosol to endoplasmic reticulum (ER) for loading onto MHC class I (MHCI) molecules. Uses the chemical energy of ATP to export peptides against the concentration gradient. During the transport cycle alternates between 'inward-facing' state with peptide binding site facing the cytosol to 'outward-facing' state with peptide binding site facing the ER lumen. Peptide antigen binding to ATP-loaded TAP1-TAP2 induces a switch to hydrolysis-competent 'outward-facing' conformation ready for peptide loading onto nascent MHCI molecules. Subsequently ATP hydrolysis resets the transporter to the 'inward facing' state for a new cycle. As a component of the peptide loading complex (PLC), acts as a molecular scaffold essential for peptide-MHCI assembly and antigen presentation. The protein is Antigen peptide transporter 2 (Tap2) of Rattus norvegicus (Rat).